Here is a 120-residue protein sequence, read N- to C-terminus: Aspartate 1-decarboxylase (120 aa).

Serine 25 functions as the Schiff-base intermediate with substrate; via pyruvic acid in the catalytic mechanism. Serine 25 carries the post-translational modification Pyruvic acid (Ser). Substrate is bound at residue threonine 57. Catalysis depends on tyrosine 58, which acts as the Proton donor. 73-75 (GAA) is a substrate binding site.

This sequence belongs to the PanD family. In terms of assembly, heterooctamer of four alpha and four beta subunits. Pyruvate serves as cofactor. In terms of processing, is synthesized initially as an inactive proenzyme, which is activated by self-cleavage at a specific serine bond to produce a beta-subunit with a hydroxyl group at its C-terminus and an alpha-subunit with a pyruvoyl group at its N-terminus.

Its subcellular location is the cytoplasm. It catalyses the reaction L-aspartate + H(+) = beta-alanine + CO2. It participates in cofactor biosynthesis; (R)-pantothenate biosynthesis; beta-alanine from L-aspartate: step 1/1. Its function is as follows. Catalyzes the pyruvoyl-dependent decarboxylation of aspartate to produce beta-alanine. The sequence is that of Aspartate 1-decarboxylase from Thermus thermophilus (strain ATCC 27634 / DSM 579 / HB8).